The chain runs to 514 residues: Na(+)/H(+) antiporter NhaB (514 aa).

Transmembrane regions (helical) follow at residues 21-41 (LAIV…SPFI), 43-63 (GWLL…CYPL), 88-108 (IMAN…IFFM), 143-163 (FLDA…FYGV), 203-223 (LMMH…VGEP), 239-259 (FFLR…LTCF), 304-324 (ALIA…VGLI), 349-369 (QESL…AVII), 390-410 (LALF…VFVA), 448-468 (ATPN…SPLI), and 484-504 (IVLS…ATIW).

Belongs to the NhaB Na(+)/H(+) (TC 2.A.34) antiporter family.

Its subcellular location is the cell inner membrane. It catalyses the reaction 2 Na(+)(in) + 3 H(+)(out) = 2 Na(+)(out) + 3 H(+)(in). Na(+)/H(+) antiporter that extrudes sodium in exchange for external protons. In Haemophilus influenzae (strain ATCC 51907 / DSM 11121 / KW20 / Rd), this protein is Na(+)/H(+) antiporter NhaB.